Consider the following 288-residue polypeptide: MERAPGSERRSPPGPGVPRPPPRGHAPSTAAPAPNPAPLSSSMQPDEERQPRISESGQFSDGFEDRGLLESSTRLKPHEAQNYRKKALWVSWLSIIVTLALAVAAFTVSVMRYSASAFGFAFDAILDVLSSAIVLWRYSNAAAVHSAHREYIACVILGVIFLLSSICIVVKAIHDLSTRLLPEVDDFLFSVSILSGILCSVLAVLKFMLGKVLTSRALITDGFNSLVGGVMGFSILLSAEVFKHNAAVWYLDGSIGVLIGLTIFAYGVKLLIDMVPRVRQTRHYEMFE.

The segment covering 1–11 (MERAPGSERRS) has biased composition (basic and acidic residues). Residues 1-64 (MERAPGSERR…ESGQFSDGFE (64 aa)) form a disordered region. The Cytoplasmic portion of the chain corresponds to 1–87 (MERAPGSERR…HEAQNYRKKA (87 aa)). Phosphoserine is present on serine 11. Pro residues predominate over residues 12–24 (PPGPGVPRPPPRG). The span at 25 to 42 (HAPSTAAPAPNPAPLSSS) shows a compositional bias: low complexity. The interval 41–71 (SSMQPDEERQPRISESGQFSDGFEDRGLLES) is required for interaction with MCOLN1. Phosphoserine occurs at positions 54, 56, and 60. Residues 88-108 (LWVSWLSIIVTLALAVAAFTV) form a helical membrane-spanning segment. Topologically, residues 109-115 (SVMRYSA) are extracellular. A helical transmembrane segment spans residues 116 to 136 (SAFGFAFDAILDVLSSAIVLW). Over 137-149 (RYSNAAAVHSAHR) the chain is Cytoplasmic. A helical transmembrane segment spans residues 150-170 (EYIACVILGVIFLLSSICIVV). The Extracellular portion of the chain corresponds to 171 to 186 (KAIHDLSTRLLPEVDD). Residues 187-207 (FLFSVSILSGILCSVLAVLKF) traverse the membrane as a helical segment. Residues 208–216 (MLGKVLTSR) lie on the Cytoplasmic side of the membrane. Residues 217-237 (ALITDGFNSLVGGVMGFSILL) traverse the membrane as a helical segment. The Extracellular portion of the chain corresponds to 238–254 (SAEVFKHNAAVWYLDGS). A helical membrane pass occupies residues 255-275 (IGVLIGLTIFAYGVKLLIDMV). The Cytoplasmic segment spans residues 276 to 288 (PRVRQTRHYEMFE).

Belongs to the TMEM163 family. As to quaternary structure, homodimer. Interacts with MCOLN1. Interacts with SLC30A1, SLC30A2, SLC30A3 and SLC30A4. In terms of tissue distribution, strongly expressed in brain. Also detected in lung, liver, kidney and spleen. Mainly expressed in the glutaminergic neuron subpopulations.

The protein localises to the cytoplasmic vesicle. The protein resides in the secretory vesicle. Its subcellular location is the synaptic vesicle membrane. It is found in the early endosome membrane. It localises to the late endosome membrane. The protein localises to the lysosome membrane. The protein resides in the cell membrane. It catalyses the reaction Zn(2+)(in) = Zn(2+)(out). Functionally, zinc ion transporter that mediates zinc efflux and plays a crucial role in intracellular zinc homeostasis. Binds the divalent cations Zn(2+), Ni(2+), and to a minor extent Cu(2+). Is a functional modulator of P2X purinoceptors, including P2RX1, P2RX3, P2RX4 and P2RX7. Plays a role in central nervous system development and is required for myelination, and survival and proliferation of oligodendrocytes. The sequence is that of Transmembrane protein 163 (Tmem163) from Rattus norvegicus (Rat).